The chain runs to 123 residues: Histone H2B.1, embryonic (123 aa).

The interval 1-32 is disordered; the sequence is MAPTGQVAKKGSKKAVKPPRASGGKKRHRKRK. Basic residues predominate over residues 10 to 32; sequence KGSKKAVKPPRASGGKKRHRKRK. An O-linked (GlcNAc) serine glycan is attached at Ser-110. Residue Lys-118 forms a Glycyl lysine isopeptide (Lys-Gly) (interchain with G-Cter in ubiquitin) linkage.

Belongs to the histone H2B family. As to quaternary structure, the nucleosome is a histone octamer containing two molecules each of H2A, H2B, H3 and H4 assembled in one H3-H4 heterotetramer and two H2A-H2B heterodimers. The octamer wraps approximately 147 bp of DNA. Monoubiquitination of Lys-118 gives a specific tag for epigenetic transcriptional activation and is also prerequisite for histone H3 'Lys-4' and 'Lys-79' methylation. Post-translationally, glcNAcylation at Ser-110 promotes monoubiquitination of Lys-118. It fluctuates in response to extracellular glucose, and associates with transcribed genes.

Its subcellular location is the nucleus. The protein localises to the chromosome. Its function is as follows. Core component of nucleosome. Nucleosomes wrap and compact DNA into chromatin, limiting DNA accessibility to the cellular machineries which require DNA as a template. Histones thereby play a central role in transcription regulation, DNA repair, DNA replication and chromosomal stability. DNA accessibility is regulated via a complex set of post-translational modifications of histones, also called histone code, and nucleosome remodeling. This is Histone H2B.1, embryonic from Psammechinus miliaris (Green sea urchin).